The chain runs to 404 residues: MKRIRDLWVRTNLIKKIGIGVVIGLLLGILLPDVTAIGILGQLFVGALKAIAPLLVFALVVQAISHQRSGQQTNITLIIVLYLLGTFLAALVAVIANYLFPLTLTLNTPVNTELSPPQGIVQVFQTLLLKLVDNPINALATANYIGVLAWALIFGLALKSVPSDFKHLIKTAADVTSQIVVWIINVAPIGIMGLVFSTVSENGISILSDYALLILVLVGTMLFVALVVNPLLAFALTHQNPYPLVFRCLKDSGLTAFFTRSSAANIPVNLQLCEDLGLSQATYLVSIPLGAMINMGGAAITINVLTLAAVNTFGIQIDFLTALLLSVVAAISACGASGVTGGSLLLIPVACSLFGISSDLAMQVVGVGFIVGVIQDSCETALNSSTDVLFTAIAENAFWKQKKA.

Transmembrane regions (helical) follow at residues 17–37 (IGIGVVIGLLLGILLPDVTAI), 44–64 (FVGALKAIAPLLVFALVVQAI), 75–95 (ITLIIVLYLLGTFLAALVAVI), 138–158 (ALATANYIGVLAWALIFGLAL), 179–199 (IVVWIINVAPIGIMGLVFSTV), 212–232 (LLILVLVGTMLFVALVVNPLL), 287–307 (IPLGAMINMGGAAITINVLTL), 319–339 (FLTALLLSVVAAISACGASGV), and 354–374 (FGISSDLAMQVVGVGFIVGVI).

The protein belongs to the dicarboxylate/amino acid:cation symporter (DAACS) (TC 2.A.23) family.

It is found in the cell membrane. The catalysed reaction is L-serine(in) + Na(+)(in) = L-serine(out) + Na(+)(out). The enzyme catalyses L-threonine(in) + Na(+)(in) = L-threonine(out) + Na(+)(out). Functionally, involved in the import of serine and threonine into the cell, with the concomitant import of sodium (symport system). This Streptococcus equi subsp. zooepidemicus (strain MGCS10565) protein is Serine/threonine transporter SstT.